We begin with the raw amino-acid sequence, 284 residues long: Anaerobic dimethyl sulfoxide reductase chain YnfH (284 aa).

Residues 1–9 are Periplasmic-facing; that stretch reads MGNGWHEWP. The chain crosses the membrane as a helical span at residues 10–30; it reads LVIFTVLGQCVVGALIVSGIG. The Cytoplasmic portion of the chain corresponds to 31 to 45; that stretch reads WFAAKNDADRQRIVR. The chain crosses the membrane as a helical span at residues 46-66; that stretch reads GMFFLWLLMGVGFIASVMHLG. Residues 67–86 are Periplasmic-facing; sequence SPLRAFNSLNRIGASGLSNE. Residues 87-107 traverse the membrane as a helical segment; the sequence is IAAGSIFFAVGGLWWLVAVIG. The Cytoplasmic segment spans residues 108-115; the sequence is KMPQALGK. Residues 116–136 traverse the membrane as a helical segment; it reads LWLLFSMALGVIFVWMMTCVY. The Periplasmic segment spans residues 137–148; that stretch reads QIDTVPTWHNGY. The chain crosses the membrane as a helical span at residues 149–169; sequence TTLAFFLTVLLSGPILAAAIL. Residues 170–180 are Cytoplasmic-facing; sequence RAARVTFNTTP. Residues 181-201 form a helical membrane-spanning segment; the sequence is FAIISVLALIACAGVIVLQGL. The Periplasmic portion of the chain corresponds to 202–222; sequence SLASIHSSVQQASALVPDYAS. A helical membrane pass occupies residues 223–243; it reads LQVWRVVLLCAGLGCWLCPLI. The Cytoplasmic portion of the chain corresponds to 244–250; sequence RRREPHV. A helical membrane pass occupies residues 251-271; it reads AGLILGLILILGGEMIGRVLF. The Periplasmic portion of the chain corresponds to 272 to 284; it reads YGLHMTVGMAIAG.

It belongs to the DmsC family. As to quaternary structure, the complex consists of three subunits: YnfF, the reductase; YnfG, an electron transfer protein, and YnfH, a membrane anchor protein.

Its subcellular location is the cell inner membrane. Terminal reductase during anaerobic growth on various sulfoxide and N-oxide compounds. The C subunit anchors the other two subunits to the membrane and stabilize the catalytic subunits. This is Anaerobic dimethyl sulfoxide reductase chain YnfH (ynfH) from Escherichia coli (strain K12).